A 126-amino-acid polypeptide reads, in one-letter code: UPF0102 protein DNO_0639 (126 aa).

It belongs to the UPF0102 family.

In Dichelobacter nodosus (strain VCS1703A), this protein is UPF0102 protein DNO_0639.